Consider the following 219-residue polypeptide: Ras-related protein Rab-32A (219 aa).

22–29 (GDIGTGKT) lines the GTP pocket. An Effector region motif is present at residues 44 to 52 (YKSTIGVDF). Residues 71 to 75 (DIAGQ) and 134 to 137 (NKCD) contribute to the GTP site. Residues 192–219 (NQPIEGTIQPGDLNKQPQPTSTGPSCCK) form a disordered region. Residues 206 to 219 (KQPQPTSTGPSCCK) are compositionally biased toward polar residues. S-geranylgeranyl cysteine attachment occurs at residues C217 and C218.

It belongs to the small GTPase superfamily. Rab family.

In Dictyostelium discoideum (Social amoeba), this protein is Ras-related protein Rab-32A (rab32A).